A 265-amino-acid chain; its full sequence is Type II pantothenate kinase (265 aa).

Asp-6 to Lys-13 provides a ligand contact to ATP. Glu-70 (proton acceptor) is an active-site residue. ATP contacts are provided by residues Thr-99, Gly-121–Gln-125, Tyr-137, and Ser-225.

It belongs to the type II pantothenate kinase family. Homodimer.

Its subcellular location is the cytoplasm. It carries out the reaction (R)-pantothenate + ATP = (R)-4'-phosphopantothenate + ADP + H(+). It functions in the pathway cofactor biosynthesis; coenzyme A biosynthesis; CoA from (R)-pantothenate: step 1/5. Functionally, catalyzes the phosphorylation of pantothenate (Pan), the first step in CoA biosynthesis. This is Type II pantothenate kinase from Staphylococcus epidermidis (strain ATCC 35984 / DSM 28319 / BCRC 17069 / CCUG 31568 / BM 3577 / RP62A).